The primary structure comprises 529 residues: Keratin, type II cytoskeletal 74 (529 aa).

The segment at 1–139 (MSRQLNIKSS…DPEIQKVRAQ (139 aa)) is head. The segment at 140-175 (EREQIKVLNDKFASFIDKVRFLEQQNQVLETKWELL) is coil 1A. Residues 140–453 (EREQIKVLND…KLLEGEECRM (314 aa)) form the IF rod domain. A linker 1 region spans residues 176–194 (QQLDLNNCKKNLEPILEGY). The interval 195-286 (ISNLRKQLET…CLYDAEIAQI (92 aa)) is coil 1B. The tract at residues 287 to 310 (QTHASETSVILSMDNNRDLDLDSI) is linker 12. The interval 311-449 (IAEVRMHYEE…ATYRKLLEGE (139 aa)) is coil 2. A tail region spans residues 450 to 529 (ECRMSGENPS…ASIPARKATR (80 aa)). The segment covering 484–500 (GASAVAGSSGSTQSGQT) has biased composition (low complexity). The disordered stretch occupies residues 484-529 (GASAVAGSSGSTQSGQTKTTEARGGDLKDTQGKSTPASIPARKATR). Positions 503-514 (TEARGGDLKDTQ) are enriched in basic and acidic residues. T513 is modified (phosphothreonine).

The protein belongs to the intermediate filament family. As to quaternary structure, heterotetramer of two type I and two type II keratins. As to expression, highly expressed in hair follicles from scalp. In hair, it is specifically present in the inner root sheath (IRS) of the hair follicle. Present in the IRS Huxley layer, but not in Henle layer or cuticle of the IRS. In the IRS Huxley layer, it is expressed in specialized Huxley cells, termed 'Fluegelzellen, along the area of differentiated Henle cells (at protein level).

Has a role in hair formation. Specific component of keratin intermediate filaments in the inner root sheath (IRS) of the hair follicle. The sequence is that of Keratin, type II cytoskeletal 74 (KRT74) from Homo sapiens (Human).